A 514-amino-acid polypeptide reads, in one-letter code: Protein spinster homolog 3 (514 aa).

Residues 1–22 (MSTECLKPQTGGPQSQSLSQGG) form a disordered region. Low complexity predominate over residues 9 to 21 (QTGGPQSQSLSQG). 12 helical membrane passes run 54–74 (VLCY…GVLL), 88–108 (GLLQ…FGYL), 116–136 (AILS…SFIS), 149–169 (FVGT…GDLF), 176–196 (CALA…YVLG), 212–232 (LMPC…PDVP), 264–284 (FVFS…LGFW), 313–333 (LIFG…GAEA), 347–367 (LICA…LILA), 376–396 (VFLA…ADIL), 415–435 (VAHV…SSVL), and 453–473 (SFLC…LTAL). The interval 482–514 (ARQPGKGTLDSKDIASRNTESQGLLSGTSTPTE) is disordered. The segment covering 497–514 (SRNTESQGLLSGTSTPTE) has biased composition (polar residues).

The protein belongs to the major facilitator superfamily. Spinster (TC 2.A.1.49) family.

The protein resides in the membrane. Its function is as follows. Sphingolipid transporter. The protein is Protein spinster homolog 3 (Spns3) of Mus musculus (Mouse).